The sequence spans 211 residues: NADH-quinone oxidoreductase subunit I (211 aa).

Residues 21 to 41 (PTTEQYPEQKKETAPRFHGRH) are disordered. 2 4Fe-4S ferredoxin-type domains span residues 43–73 (LNRHPDGLEKCVGCELCAWACPADAIYVEGA) and 89–118 (RVYQINYLRCILCGLCIEACPTRALTMSND). The [4Fe-4S] cluster site is built by Cys53, Cys56, Cys59, Cys63, Cys98, Cys101, Cys104, and Cys108. Positions 141 to 211 (RAGMESPPHP…AHGAGSERPR (71 aa)) are disordered. Residues 152–166 (RLGESETDYYTRDPD) are compositionally biased toward basic and acidic residues. Residues 179–191 (DEADEAGEAGEAG) are compositionally biased toward acidic residues. Basic and acidic residues predominate over residues 192–211 (EAERAADKVPAHGAGSERPR).

It belongs to the complex I 23 kDa subunit family. In terms of assembly, NDH-1 is composed of 14 different subunits. Subunits NuoA, H, J, K, L, M, N constitute the membrane sector of the complex. Requires [4Fe-4S] cluster as cofactor.

Its subcellular location is the cell membrane. It catalyses the reaction a quinone + NADH + 5 H(+)(in) = a quinol + NAD(+) + 4 H(+)(out). In terms of biological role, NDH-1 shuttles electrons from NADH, via FMN and iron-sulfur (Fe-S) centers, to quinones in the respiratory chain. The immediate electron acceptor for the enzyme in this species is believed to be ubiquinone. Couples the redox reaction to proton translocation (for every two electrons transferred, four hydrogen ions are translocated across the cytoplasmic membrane), and thus conserves the redox energy in a proton gradient. This is NADH-quinone oxidoreductase subunit I from Parafrankia sp. (strain EAN1pec).